A 304-amino-acid polypeptide reads, in one-letter code: MENKDALDIGKDDTNTSEADVSKNETQEQPVLSKSALKRLKRQQEWDAGREKRAEMRREKKRLRKEERKRKIEAGEVVKSQKKRIRLGKVVPSSIRIVLDCAFDDLMNDKEINSLCQQVTRCHSANRTALHPVELFATNFGGRLKTRQDFVLKGQQNNWKRYNPTTKSYLEEFESQKEKLVYLSADSDNTITELDEDKIYIIGAIVDKNRYKNLCQNKASEQGIKTAKLPIDEYIKITDRKILTVNQVFEILSLWLEYRDWEKAFMEVIPKRKGILLKSDESFDVSEDTRSQSNQSDSELEKEN.

Composition is skewed to basic and acidic residues over residues M1–T26 and R42–I72. The disordered stretch occupies residues M1–I72. The SAM-dependent MTase TRM10-type domain occupies Q81–L276. S-adenosyl-L-methionine is bound by residues L183, G203, D207 to Y211, C215, L229, and K241 to L243. D207 functions as the Proton acceptor in the catalytic mechanism. A disordered region spans residues S282–N304. At S296 the chain carries Phosphoserine.

It belongs to the class IV-like SAM-binding methyltransferase superfamily. TRM10 family. In terms of assembly, monomer.

The protein localises to the cytoplasm. Its subcellular location is the nucleus. It catalyses the reaction guanosine(9) in tRNA + S-adenosyl-L-methionine = N(1)-methylguanosine(9) in tRNA + S-adenosyl-L-homocysteine + H(+). S-adenosyl-L-methionine-dependent guanine N(1)-methyltransferase that catalyzes the formation of N(1)-methylguanine at position 9 (m1G9) in cytoplasmic tRNA. The protein is tRNA (guanine(9)-N1)-methyltransferase of Schizosaccharomyces pombe (strain 972 / ATCC 24843) (Fission yeast).